The sequence spans 552 residues: HTH-type transcriptional regulator SgrR (552 aa).

One can recognise an HTH marR-type domain in the interval 1 to 116 (MPSGRLQQQF…LISHLGRSFR (116 aa)). Positions 26 to 49 (LNELADLLNCSRRHMRTLLNTMQA) form a DNA-binding region, H-T-H motif. Positions 163-493 (ELEADIAHHW…RDWQGDAAQW (331 aa)) are solute-binding.

In terms of biological role, activates the small RNA gene sgrS under glucose-phosphate stress conditions as well as yfdZ. Represses its own transcription under both stress and non-stress conditions. Might act as a sensor of the intracellular accumulation of phosphoglucose by binding these molecules in its C-terminal solute-binding domain. This Salmonella typhimurium (strain LT2 / SGSC1412 / ATCC 700720) protein is HTH-type transcriptional regulator SgrR.